The chain runs to 124 residues: Small ribosomal subunit protein uS12 (124 aa).

Position 89 is a 3-methylthioaspartic acid (D89).

Belongs to the universal ribosomal protein uS12 family. In terms of assembly, part of the 30S ribosomal subunit. Contacts proteins S8 and S17. May interact with IF1 in the 30S initiation complex.

In terms of biological role, with S4 and S5 plays an important role in translational accuracy. Functionally, interacts with and stabilizes bases of the 16S rRNA that are involved in tRNA selection in the A site and with the mRNA backbone. Located at the interface of the 30S and 50S subunits, it traverses the body of the 30S subunit contacting proteins on the other side and probably holding the rRNA structure together. The combined cluster of proteins S8, S12 and S17 appears to hold together the shoulder and platform of the 30S subunit. In Shewanella amazonensis (strain ATCC BAA-1098 / SB2B), this protein is Small ribosomal subunit protein uS12.